The chain runs to 126 residues: Small ribosomal subunit protein uS11 (126 aa).

This sequence belongs to the universal ribosomal protein uS11 family. Part of the 30S ribosomal subunit.

In terms of biological role, located on the platform of the 30S subunit. This is Small ribosomal subunit protein uS11 from Methanosarcina mazei (strain ATCC BAA-159 / DSM 3647 / Goe1 / Go1 / JCM 11833 / OCM 88) (Methanosarcina frisia).